A 205-amino-acid polypeptide reads, in one-letter code: ATP-dependent Clp protease proteolytic subunit (205 aa).

The active-site Nucleophile is Ser98. Residue His123 is part of the active site.

The protein belongs to the peptidase S14 family. As to quaternary structure, fourteen ClpP subunits assemble into 2 heptameric rings which stack back to back to give a disk-like structure with a central cavity, resembling the structure of eukaryotic proteasomes.

It localises to the cytoplasm. The enzyme catalyses Hydrolysis of proteins to small peptides in the presence of ATP and magnesium. alpha-casein is the usual test substrate. In the absence of ATP, only oligopeptides shorter than five residues are hydrolyzed (such as succinyl-Leu-Tyr-|-NHMec, and Leu-Tyr-Leu-|-Tyr-Trp, in which cleavage of the -Tyr-|-Leu- and -Tyr-|-Trp bonds also occurs).. Its function is as follows. Cleaves peptides in various proteins in a process that requires ATP hydrolysis. Has a chymotrypsin-like activity. Plays a major role in the degradation of misfolded proteins. This Desulforapulum autotrophicum (strain ATCC 43914 / DSM 3382 / VKM B-1955 / HRM2) (Desulfobacterium autotrophicum) protein is ATP-dependent Clp protease proteolytic subunit.